The sequence spans 245 residues: 1-(5-phosphoribosyl)-5-[(5-phosphoribosylamino)methylideneamino] imidazole-4-carboxamide isomerase (245 aa).

The Proton acceptor role is filled by Asp7. Asp129 serves as the catalytic Proton donor.

It belongs to the HisA/HisF family.

The protein resides in the cytoplasm. The enzyme catalyses 1-(5-phospho-beta-D-ribosyl)-5-[(5-phospho-beta-D-ribosylamino)methylideneamino]imidazole-4-carboxamide = 5-[(5-phospho-1-deoxy-D-ribulos-1-ylimino)methylamino]-1-(5-phospho-beta-D-ribosyl)imidazole-4-carboxamide. The protein operates within amino-acid biosynthesis; L-histidine biosynthesis; L-histidine from 5-phospho-alpha-D-ribose 1-diphosphate: step 4/9. The polypeptide is 1-(5-phosphoribosyl)-5-[(5-phosphoribosylamino)methylideneamino] imidazole-4-carboxamide isomerase (Shewanella sp. (strain W3-18-1)).